A 120-amino-acid polypeptide reads, in one-letter code: Protein GP96 (120 aa).

The protein belongs to the herpesviridae UL96 family.

This chain is Protein GP96, found in Cavia porcellus (Guinea pig).